We begin with the raw amino-acid sequence, 400 residues long: Unsaturated glucuronyl hydrolase (400 aa).

The signal sequence occupies residues 1–20; that stretch reads MRKLVYLVLVLGLTFLNVRC. The Nucleophile role is filled by Asp-120. Asp-181 functions as the Proton donor in the catalytic mechanism.

Belongs to the glycosyl hydrolase 88 family.

Its subcellular location is the cell surface. Its function is as follows. Unsaturated glucuronyl hydrolase involved in ulvan degradation. Ulvan is the main polysaccharide component of the Ulvales (green seaweed) cell wall. It is composed of disaccharide building blocks comprising 3-sulfated rhamnose (Rha3S) linked to D-glucuronic acid (GlcA), L-iduronic acid (IduA), or D-xylose (Xyl). Unsaturated glucuronyl hydrolase catalyzes the cleavage of the unsaturated 4-deoxy-L-threo-hex-4-enopyranosiduronic acid (deltaUA) at the non-reducing end of ulvan oligomers, thus forming 5-dehydro-4-deoxy-D-glucuronate. This Formosa agariphila (strain DSM 15362 / KCTC 12365 / LMG 23005 / KMM 3901 / M-2Alg 35-1) protein is Unsaturated glucuronyl hydrolase.